Reading from the N-terminus, the 185-residue chain is Adenine phosphoribosyltransferase (185 aa).

This sequence belongs to the purine/pyrimidine phosphoribosyltransferase family. Homodimer.

Its subcellular location is the cytoplasm. It carries out the reaction AMP + diphosphate = 5-phospho-alpha-D-ribose 1-diphosphate + adenine. It participates in purine metabolism; AMP biosynthesis via salvage pathway; AMP from adenine: step 1/1. Its function is as follows. Catalyzes a salvage reaction resulting in the formation of AMP, that is energically less costly than de novo synthesis. This chain is Adenine phosphoribosyltransferase, found in Corynebacterium glutamicum (strain ATCC 13032 / DSM 20300 / JCM 1318 / BCRC 11384 / CCUG 27702 / LMG 3730 / NBRC 12168 / NCIMB 10025 / NRRL B-2784 / 534).